Here is a 247-residue protein sequence, read N- to C-terminus: Small ribosomal subunit protein eS6 (247 aa).

The segment at 194–247 is disordered; it reads ALKKKRVTKKREDHAEYTKLLAQRMKEAKERKMERKRSNSRSKGDSIRESTSKK. Residues 217–247 show a composition bias toward basic and acidic residues; sequence RMKEAKERKMERKRSNSRSKGDSIRESTSKK.

It belongs to the eukaryotic ribosomal protein eS6 family. Post-translationally, ribosomal protein S6 is the major substrate of protein kinases in eukaryote ribosomes.

In terms of biological role, component of the 40S small ribosomal subunit. Plays an important role in controlling cell growth and proliferation through the selective translation of particular classes of mRNA. In Aplysia californica (California sea hare), this protein is Small ribosomal subunit protein eS6 (RPS6).